The sequence spans 184 residues: NADH-quinone oxidoreductase subunit B (184 aa).

Residues cysteine 63, cysteine 64, cysteine 128, and cysteine 158 each contribute to the [4Fe-4S] cluster site.

This sequence belongs to the complex I 20 kDa subunit family. As to quaternary structure, NDH-1 is composed of 14 different subunits. Subunits NuoB, C, D, E, F, and G constitute the peripheral sector of the complex. The cofactor is [4Fe-4S] cluster.

The protein localises to the cell inner membrane. It carries out the reaction a quinone + NADH + 5 H(+)(in) = a quinol + NAD(+) + 4 H(+)(out). Functionally, NDH-1 shuttles electrons from NADH, via FMN and iron-sulfur (Fe-S) centers, to quinones in the respiratory chain. The immediate electron acceptor for the enzyme in this species is believed to be ubiquinone. Couples the redox reaction to proton translocation (for every two electrons transferred, four hydrogen ions are translocated across the cytoplasmic membrane), and thus conserves the redox energy in a proton gradient. The polypeptide is NADH-quinone oxidoreductase subunit B (Xylella fastidiosa (strain M12)).